Reading from the N-terminus, the 47-residue chain is Protein YqhI (47 aa).

The polypeptide is Protein YqhI (Escherichia coli (strain K12)).